Here is a 303-residue protein sequence, read N- to C-terminus: UDP-3-O-acyl-N-acetylglucosamine deacetylase (303 aa).

Zn(2+)-binding residues include histidine 77, histidine 236, and aspartate 240. The active-site Proton donor is the histidine 263.

This sequence belongs to the LpxC family. Zn(2+) is required as a cofactor.

It carries out the reaction a UDP-3-O-[(3R)-3-hydroxyacyl]-N-acetyl-alpha-D-glucosamine + H2O = a UDP-3-O-[(3R)-3-hydroxyacyl]-alpha-D-glucosamine + acetate. It functions in the pathway glycolipid biosynthesis; lipid IV(A) biosynthesis; lipid IV(A) from (3R)-3-hydroxytetradecanoyl-[acyl-carrier-protein] and UDP-N-acetyl-alpha-D-glucosamine: step 2/6. Functionally, catalyzes the hydrolysis of UDP-3-O-myristoyl-N-acetylglucosamine to form UDP-3-O-myristoylglucosamine and acetate, the committed step in lipid A biosynthesis. The chain is UDP-3-O-acyl-N-acetylglucosamine deacetylase from Ruthia magnifica subsp. Calyptogena magnifica.